The primary structure comprises 393 residues: MSQQNIPFTNNVQTADFSVQHSKSEKVNLMNMTRQEMREFLANLGEKPFRADQLMKWIYHFGEDEFDNMSNINKVLREKLKKVAEIKAPAIAIEQRSSDGTIKWAMQVGNQQIETVYIPEGDRATLCVSSQVGCALECKFCSTAQQGFNRNLTVSEIIGQVWRASKIIGNFGITGVRPITNVVMMGMGEPLLNMNNVIPAMQIMLDDFAYGLSKRRVTLSTAGVVPALDLMREKIDVALAISLHAPNNELRNEIMPINKKYNIKMLMDSVAKYLAVSNANHGKVTIEYVLLDHVNDGTEHAHQLAEVLKNTPCKINLIPWNPFPEAPYGKSSNSRVDRFQKTLMEYGFTVIVRKTRGDDIDAACGQLAGEVIDRTKRTLEKRKFGKSIMVNNH.

E114 serves as the catalytic Proton acceptor. Positions 120–359 (EGDRATLCVS…VIVRKTRGDD (240 aa)) constitute a Radical SAM core domain. C127 and C364 are disulfide-bonded. The [4Fe-4S] cluster site is built by C134, C138, and C141. Residues 188 to 189 (GE), S220, 242 to 244 (SLH), and N321 contribute to the S-adenosyl-L-methionine site. The S-methylcysteine intermediate role is filled by C364.

The protein belongs to the radical SAM superfamily. RlmN family. The cofactor is [4Fe-4S] cluster.

Its subcellular location is the cytoplasm. It catalyses the reaction adenosine(2503) in 23S rRNA + 2 reduced [2Fe-2S]-[ferredoxin] + 2 S-adenosyl-L-methionine = 2-methyladenosine(2503) in 23S rRNA + 5'-deoxyadenosine + L-methionine + 2 oxidized [2Fe-2S]-[ferredoxin] + S-adenosyl-L-homocysteine. The catalysed reaction is adenosine(37) in tRNA + 2 reduced [2Fe-2S]-[ferredoxin] + 2 S-adenosyl-L-methionine = 2-methyladenosine(37) in tRNA + 5'-deoxyadenosine + L-methionine + 2 oxidized [2Fe-2S]-[ferredoxin] + S-adenosyl-L-homocysteine. Its function is as follows. Specifically methylates position 2 of adenine 2503 in 23S rRNA and position 2 of adenine 37 in tRNAs. m2A2503 modification seems to play a crucial role in the proofreading step occurring at the peptidyl transferase center and thus would serve to optimize ribosomal fidelity. The polypeptide is Dual-specificity RNA methyltransferase RlmN (Haemophilus ducreyi (strain 35000HP / ATCC 700724)).